A 223-amino-acid chain; its full sequence is Small ribosomal subunit protein uS3 (223 aa).

Positions 40-108 (IRELVHRELP…KVHLNIQEIR (69 aa)) constitute a KH type-2 domain.

It belongs to the universal ribosomal protein uS3 family. Part of the 30S ribosomal subunit. Forms a tight complex with proteins S10 and S14.

Its function is as follows. Binds the lower part of the 30S subunit head. Binds mRNA in the 70S ribosome, positioning it for translation. This is Small ribosomal subunit protein uS3 from Thermomicrobium roseum (strain ATCC 27502 / DSM 5159 / P-2).